The chain runs to 387 residues: Guanylate kinase 1 (387 aa).

The 183-residue stretch at 137 to 319 (EKPIVISGPS…CYKKLKNLLG (183 aa)) folds into the Guanylate kinase-like domain. 144-151 (GPSGVGKG) contacts ATP. Active-site residues include Arg-177, Arg-270, and Arg-281. ATP contacts are provided by Asn-304 and Asp-305.

It belongs to the guanylate kinase family. As to quaternary structure, monomer.

The enzyme catalyses GMP + ATP = GDP + ADP. Essential for recycling GMP and indirectly, cGMP. Required for normal development of the gametophyte and embryo, in association with GK2. This chain is Guanylate kinase 1 (GK-1), found in Arabidopsis thaliana (Mouse-ear cress).